A 223-amino-acid polypeptide reads, in one-letter code: Class E basic helix-loop-helix protein 23 (223 aa).

A disordered region spans residues 32-93 (PETTRGFGAS…GVAVDARRRP (62 aa)). The bHLH domain occupies 98–152 (SLRLSINARERRRMHDLNDALDGLRAVIPYAHSPSVRKLSKIATLLLAKNYILMQ).

As to expression, expressed in brain and retina.

The protein localises to the nucleus. Its function is as follows. May function as transcriptional repressor. May modulate the expression of genes required for the differentiation and/or maintenance of pancreatic and neuronal cell types. May be important for rod bipolar cell maturation. The chain is Class E basic helix-loop-helix protein 23 (Bhlhe23) from Mus musculus (Mouse).